A 392-amino-acid polypeptide reads, in one-letter code: L-rhamnonate dehydratase (392 aa).

Substrate-binding residues include histidine 22 and arginine 48. Residues aspartate 214, glutamate 240, and glutamate 268 each coordinate Mg(2+). Residue histidine 318 is the Proton acceptor of the active site. Glutamate 338 is a substrate binding site.

The protein belongs to the mandelate racemase/muconate lactonizing enzyme family. RhamD subfamily. In terms of assembly, homooctamer; tetramer of dimers. Requires Mg(2+) as cofactor.

The enzyme catalyses L-rhamnonate = 2-dehydro-3-deoxy-L-rhamnonate + H2O. Catalyzes the dehydration of L-rhamnonate to 2-keto-3-deoxy-L-rhamnonate (KDR). In Paraburkholderia xenovorans (strain LB400), this protein is L-rhamnonate dehydratase.